A 133-amino-acid chain; its full sequence is MALHNLQPAPGSTHKTKRVGRGQGSGMGKTATRGQKGQKSRTGYSQKRGFEGGQQPLQRRLPKIGFTSNVVKPHAINVDKVKKVAQLEEITMETIRSVYKLPKYVTRVKLIGSSVQEIVSKIKDDNISYSGQK.

Positions 1–62 are disordered; the sequence is MALHNLQPAP…GQQPLQRRLP (62 aa). Over residues 32 to 45 the composition is skewed to polar residues; that stretch reads TRGQKGQKSRTGYS.

The protein belongs to the universal ribosomal protein uL15 family. In terms of assembly, part of the 50S ribosomal subunit.

Binds to the 23S rRNA. The protein is Large ribosomal subunit protein uL15 of Nitratiruptor sp. (strain SB155-2).